A 385-amino-acid chain; its full sequence is Putative non-inhibitory serpin-Z11 (385 aa).

The interval 324–348 is RCL; it reads GTTAVEAMYSPSSPGYSPGYQPPRP.

Belongs to the serpin family.

In Oryza sativa subsp. japonica (Rice), this protein is Putative non-inhibitory serpin-Z11.